The following is a 404-amino-acid chain: RNA exonuclease 3 (404 aa).

One can recognise an Exonuclease domain in the interval 243–389 (VLSLDCEMAF…QDAIATMDVV (147 aa)).

Belongs to the REXO1/REXO3 family.

It localises to the cytoplasm. The protein localises to the nucleus. Functionally, 3' to 5' exoribonuclease required for proper 3' end maturation of MRP RNA and of the U5L snRNA. This Saccharomyces cerevisiae (strain ATCC 204508 / S288c) (Baker's yeast) protein is RNA exonuclease 3 (REX3).